The chain runs to 264 residues: Ribosomal RNA small subunit methyltransferase A (264 aa).

S-adenosyl-L-methionine is bound by residues asparagine 15, isoleucine 17, glycine 42, glutamate 64, aspartate 90, and asparagine 109.

Belongs to the class I-like SAM-binding methyltransferase superfamily. rRNA adenine N(6)-methyltransferase family. RsmA subfamily.

The protein localises to the cytoplasm. The catalysed reaction is adenosine(1518)/adenosine(1519) in 16S rRNA + 4 S-adenosyl-L-methionine = N(6)-dimethyladenosine(1518)/N(6)-dimethyladenosine(1519) in 16S rRNA + 4 S-adenosyl-L-homocysteine + 4 H(+). Functionally, specifically dimethylates two adjacent adenosines (A1518 and A1519) in the loop of a conserved hairpin near the 3'-end of 16S rRNA in the 30S particle. May play a critical role in biogenesis of 30S subunits. This is Ribosomal RNA small subunit methyltransferase A from Wolbachia pipientis subsp. Culex pipiens (strain wPip).